The chain runs to 357 residues: Phosphoribosylformylglycinamidine cyclo-ligase (357 aa).

This sequence belongs to the AIR synthase family.

Its subcellular location is the cytoplasm. It carries out the reaction 2-formamido-N(1)-(5-O-phospho-beta-D-ribosyl)acetamidine + ATP = 5-amino-1-(5-phospho-beta-D-ribosyl)imidazole + ADP + phosphate + H(+). The protein operates within purine metabolism; IMP biosynthesis via de novo pathway; 5-amino-1-(5-phospho-D-ribosyl)imidazole from N(2)-formyl-N(1)-(5-phospho-D-ribosyl)glycinamide: step 2/2. The protein is Phosphoribosylformylglycinamidine cyclo-ligase of Rhodopseudomonas palustris (strain ATCC BAA-98 / CGA009).